A 432-amino-acid chain; its full sequence is Proteinase-activated receptor 1 (432 aa).

The N-terminal stretch at 1–21 (MGPRRLLLVAVGLSLCGPLLS) is a signal peptide. A propeptide spans 22–45 (SRVPMRQPESERMYATPYATPNPR) (removed for receptor activation). Over 46 to 109 (SFFLRNPSED…SGYLTSPWLT (64 aa)) the chain is Extracellular. N-linked (GlcNAc...) asparagine glycosylation is found at Asn-69 and Asn-82. A helical transmembrane segment spans residues 110–135 (LFIPSVYTFVFIVSLPLNILAIAVFV). Residues 136–144 (FRMKVKKPA) are Cytoplasmic-facing. The helical transmembrane segment at 145–164 (VVYMLHLAMADVLFVSVLPF) threads the bilayer. Over 165–183 (KISYYFSGTDWQFGSGMCR) the chain is Extracellular. Residues Cys-182 and Cys-261 are joined by a disulfide bond. A helical transmembrane segment spans residues 184–205 (FATAACYCNMYASIMLMTVISI). Topologically, residues 206 to 225 (DRFLAVVYPIQSLSWRTLGR) are cytoplasmic. The helical transmembrane segment at 226–246 (ANFTCVVIWVMAIMGVVPLLL) threads the bilayer. The Extracellular segment spans residues 247-275 (KEQTTQVPGLNITTCHDVLNETLLHGFYS). Residues Asn-257 and Asn-266 are each glycosylated (N-linked (GlcNAc...) asparagine). A helical transmembrane segment spans residues 276 to 295 (YYFSAFSAIFFLVPLIISTV). Over 296 to 318 (CYTSIIRCLSSSAVANRSKKSRA) the chain is Cytoplasmic. The helical transmembrane segment at 319–341 (LFLSAAVFCIFIVCFGPTNVLLI) threads the bilayer. Over 342–357 (VHYLLLSDSPGTETAY) the chain is Extracellular. The chain crosses the membrane as a helical span at residues 358 to 381 (FAYLLCVCVTSVASCIDPLIYYYA). The Cytoplasmic portion of the chain corresponds to 382 to 432 (SSECQKHLYSILCCRESSDSNSCNSTGQLMPSKMDTCSSHLNNSIYKKLLA). Ser-425 bears the Phosphoserine mark.

Belongs to the G-protein coupled receptor 1 family. Post-translationally, proteolytic cleavage by thrombin generates a new N-terminus that functions as a tethered ligand. Also proteolytically cleaved by cathepsin CTSG. Phosphorylated in the C-terminal tail; probably mediating desensitization prior to the uncoupling and internalization of the receptor. In terms of tissue distribution, expressed in primary cultured oligodendrocytes.

It is found in the cell membrane. In terms of biological role, high affinity receptor that binds the activated thrombin, leading to calcium release from intracellular stores. The thrombin-activated receptor signaling pathway is mediated through PTX-insensitive G proteins, activation of phospholipase C resulting in the production of 1D-myo-inositol 1,4,5-trisphosphate (InsP3) which binds to InsP3 receptors causing calcium release from the stores. In astrocytes, the calcium released into the cytosol allows the Ca(2+)-dependent release of L-glutamate into the synaptic cleft through BEST1, that targets the neuronal postsynaptic GRIN2A/NMDAR receptor resulting in the synaptic plasticity regulation. May play a role in platelets activation and in vascular development. Mediates up-regulation of pro-inflammatory cytokines, such as MCP-1/CCL2 and IL6, triggered by coagulation factor Xa (F10) in cardiac fibroblasts and umbilical vein endothelial cells. This Rattus norvegicus (Rat) protein is Proteinase-activated receptor 1.